A 146-amino-acid polypeptide reads, in one-letter code: Inner membrane protein YdgK (146 aa).

At 1 to 12 the chain is on the cytoplasmic side; that stretch reads MTTTTPQRIGGW. A helical membrane pass occupies residues 13 to 33; the sequence is LLGPLAWLLVALLSTTLALLL. Over 34–59 the chain is Periplasmic; that stretch reads YTAALSSPQTFQTLGGQALTTQILWG. The chain crosses the membrane as a helical span at residues 60-80; the sequence is VSFITAIALWYYTLWLTIAFF. Residues 81-89 are Cytoplasmic-facing; the sequence is KRRRCVPKH. A helical membrane pass occupies residues 90-110; that stretch reads YIIWLLISVLLAVKAFAFSPV. Topologically, residues 111-112 are periplasmic; the sequence is ED. The chain crosses the membrane as a helical span at residues 113-133; that stretch reads GIAVRQLLFTLLATALIVPYF. The Cytoplasmic portion of the chain corresponds to 134 to 146; it reads KRSSRVKATFVNP.

The protein to Synechocystis PCC 6803 sll0481.

The protein localises to the cell inner membrane. The sequence is that of Inner membrane protein YdgK (ydgK) from Escherichia coli (strain K12).